We begin with the raw amino-acid sequence, 1527 residues long: Rho guanine nucleotide exchange factor 11 (1527 aa).

Positions 1 to 56 (MSIRLPHSIDRSASKKQSHLSSPIASWLSSLSSLGDSTPERTSPSHHRQPSDTSET) are disordered. 4 positions are modified to phosphoserine: serine 2, serine 30, serine 32, and serine 51. A compositionally biased stretch (low complexity) spans 19–37 (HLSSPIASWLSSLSSLGDS). Residues 64-143 (CVIIQKDQHG…LTLLGSSPPS (80 aa)) form the PDZ domain. A disordered region spans residues 216–247 (PCGETSQRTCEGRLSVDSQEADSGLDSGTERF). A phosphoserine mark is found at serine 262 and serine 268. Residue threonine 271 is modified to Phosphothreonine. Residues serine 272 and serine 288 each carry the phosphoserine modification. One can recognise an RGSL domain in the interval 323–503 (ESDIIFQDLE…NTFMSHAGIR (181 aa)). Residues 461 to 487 (LRERQMAEKQLAALGDILSKYEEDRSA) are a coiled coil. Disordered regions lie at residues 506 to 569 (ESRS…QSIK) and 582 to 687 (NSHQ…GRRS). The span at 509–519 (SSCTAEKTQSA) shows a compositional bias: polar residues. 2 stretches are compositionally biased toward basic and acidic residues: residues 539-551 (SKKEKDALEDKKR) and 624-645 (KGREEMKRSRKAENVPRPRSDV). A phosphoserine mark is found at serine 643 and serine 671. Residues 656–672 (LHQSASSSASSLSTRSL) are compositionally biased toward low complexity. Phosphothreonine occurs at positions 676 and 680. The DH domain maps to 742 to 931 (DRQEVINELF…REILKFVNEA (190 aa)). The region spanning 973–1087 (KMIHEGPLTW…WMELLEEAVQ (115 aa)) is the PH domain. Disordered stretches follow at residues 1090–1184 (TKHP…NRGI), 1231–1321 (QAAG…TEPA), and 1379–1411 (AGPLDSSTEPTGTPPSPSQCHSLPAWPTEPQPY). Positions 1126–1138 (EVYHTEKEPKKLP) are enriched in basic and acidic residues. The segment covering 1242–1251 (PTPSVVSITS) has biased composition (polar residues). Serine 1299 and serine 1304 each carry phosphoserine. Over residues 1312 to 1321 (AAEAASTEPA) the composition is skewed to low complexity. Serine 1462 and serine 1463 each carry phosphoserine. Threonine 1467 and threonine 1480 each carry phosphothreonine. Residues 1480–1527 (TDYSLSPPAKEALASDSQNGQEQGSCPEEGSDIALEDSATDTAVSPGP) form a disordered region. A Phosphoserine modification is found at serine 1485. Residues 1494-1503 (SDSQNGQEQG) show a composition bias toward polar residues. Residues 1508–1518 (EGSDIALEDSA) are compositionally biased toward acidic residues.

In terms of assembly, interacts with RHOA, GNA13 and SLC1A6. Interacts with GNA12, PLXNB1 and PLXNB2. Interacts (via DH domain) with GCSAM (via C-terminus). Found in a complex with ARHGEF11 and ARHGEF12; binding to ARHGEF11 and ARHGEF12 enhances CDC42 GEF activity of PLEKHG4B, and PLEKHG4B, in turn, inhibits ARHGEF11- and ARHGEF12-mediated RHOA activation. In terms of processing, phosphorylated by MAP kinase p38 (MAPK11, MAPK12, MAPK13 and/or MAPK14). Post-translationally, ubiquitinated by the BCR(KLHL20) E3 ubiquitin ligase complex when previously phosphorylated by MAP kinase p38 (MAPK11, MAPK12, MAPK13 and/or MAPK14), leading to its degradation, thereby restricting RhoA activity and facilitating growth cone spreading and neurite outgrowth.

It localises to the cytoplasm. It is found in the membrane. Functionally, may play a role in the regulation of RhoA GTPase by guanine nucleotide-binding alpha-12 (GNA12) and alpha-13 (GNA13). Acts as guanine nucleotide exchange factor (GEF) for RhoA GTPase and may act as GTPase-activating protein (GAP) for GNA12 and GNA13. Involved in neurotrophin-induced neurite outgrowth. The chain is Rho guanine nucleotide exchange factor 11 (Arhgef11) from Rattus norvegicus (Rat).